We begin with the raw amino-acid sequence, 165 residues long: UPF0303 protein Bcep1808_1522 (165 aa).

This sequence belongs to the UPF0303 family.

This is UPF0303 protein Bcep1808_1522 from Burkholderia vietnamiensis (strain G4 / LMG 22486) (Burkholderia cepacia (strain R1808)).